The primary structure comprises 187 residues: LSM complex subunit LSM4 (187 aa).

Residues 2-85 form the Sm domain; it reads LPLYLLTNAK…IKFIKLQDNI (84 aa). The disordered stretch occupies residues 93–187; that stretch reads INSNNNSNSN…NSSSPQKVEF (95 aa). The segment covering 112-167 has biased composition (low complexity); sequence NRDSNNNRGNYNRRNNNNGNSNRRPYSQNRQYNNSNSSNINNSINSINSNNQNMNN. At Arg-119 the chain carries Omega-N-methylarginine. Residues 175–187 are compositionally biased toward polar residues; the sequence is HHFNSSSPQKVEF. At Ser-181 the chain carries Phosphoserine.

The protein belongs to the snRNP Sm proteins family. In terms of assembly, component of the heptameric LSM1-LSM7 complex that forms a seven-membered ring structure with a donut shape. The LSm subunits are arranged in the order LSM1, LSM2, LSM3, LSM6, LSM5, LSM7 and LSM4. Except for LSM1, where a C-terminal helix crosses the ring structure to form additional interactions with LSM3 and LSM6, each subunit interacts only with its two neighboring subunits. The LSM1-LSM7 complex interacts with PAT1; within the complex PAT1 has direct interactions with LSM2 and LSM3. The LSM1-LSM7 complex interacts with XRN1. Component of the heptameric LSM2-LSM8 complex that forms a seven-membered ring structure with a donut shape; an RNA strand can pass through the hole in the center of the ring structure. The LSm subunits are arranged in the order LSM8, LSM2, LSM3, LSM6, LSM5, LSM7 and LSM4. Component of the spliceosome U4/U6-U5 tri-snRNP complex composed of the U4, U6 and U5 snRNAs and at least PRP3, PRP4, PRP6, PRP8, PRP18, PRP31, PRP38, SNU13, SNU23, SNU66, SNU114, SPP381, SMB1, SMD1, SMD2, SMD3, SMX2, SMX3, LSM2, LSM3, LSM4, LSM5, LSM6, LSM7, LSM8, BRR2 and DIB1. May be found in a complex comprising LSM2-LSM7 without LSM1 or LSM8; the complex associates with pre-P RNA and snoRNA SNR5.

The protein localises to the nucleus. It is found in the cytoplasm. Its function is as follows. Component of LSm protein complexes, which are involved in RNA processing and may function in a chaperone-like manner. Component of the cytoplasmic LSM1-LSM7 complex which is involved in mRNA degradation by activating the decapping step. Together with PAT1, the LSM1-LSM7 complex binds to osmotic stress-activated mRNAs to attenuate the osmotic stress response, probably by limiting ribosome access to the mRNA and consequently translation. Component of the nuclear LSM2-LSM8 complex, which is involved in spliceosome assembly. The LSM2-LSM8 complex plays a role in the biogenesis of the spliceosomal U4/U6-U5 tri-snRNP complex by accelerating PRP24-mediated annealing of U4/U6 di-snRNA. The LSM2-LSM8 complex binds U6 snRNA terminating with a non-cyclic 3' phosphate group. LSM2-LSM8 is probably also involved in degradation of nuclear pre-mRNA by targeting them for decapping. LSM2-LSM8 could be involved in processing of pre-tRNAs, pre-rRNAs and U3 snoRNA, although involvement may be indirect. In a complex that probably contains LSM2-LSM7, but not LSM1 or LSM8, associates with the precursor of the RNA component of RNase P (pre-P RNA) and may be involved in maturing pre-P RNA; the complex also associates with snoRNA SNR5. The polypeptide is LSM complex subunit LSM4 (Saccharomyces cerevisiae (strain ATCC 204508 / S288c) (Baker's yeast)).